The primary structure comprises 562 residues: MDDNKRPLYLPFAGPAILEAPLINKGSAFSEEERIFFNLEGLVPYAIETIEEQASRAYDQFRSFNNDLDKHIYLRNIQDTNETLFYRLVQNNISEMMPIIYTPTVGLACERFSKNYRRNRGLFISYPNKDRIDDILNNSTRQKVKIIVVTDGERILGLGDQGIGGMGIPIGKLSLYTSCGGISPAYTLPITLDVGTDNPQLLEDPMYMGWRHPRIGGEEYAEFIEAFMQAVHVRWPDTLIQFEDFAQKNAMPILERYKDRYCCFNDDIQGTAAVAVGCLLAACKAAGTELNQQRIAFLGAGSAGCGIAEAIVAQMVSEGISDEQARTQVCMVDRWGLLLDNMPNLLPFQQKLAQKCANIQNWNNFSDNISLLDVVNNAKPTVLIGVSGVPGLFTEEIIRAMHSHCARPIIFPMSNPTSRVEATPKDILHWTSGQALVATGSPFEPVVVDGETYEIAQCNNSFIFPGIGLGVLASGARHVSDAMLMASSRALAECSPLAIDGTGPLLPKLEDIHAVSKHIAFAVGKVAVEQGLTLPMSDEILQQSIEGNFWKPEYRRYKRTSF.

Y101 functions as the Proton donor in the catalytic mechanism. R154 lines the NAD(+) pocket. The Proton acceptor role is filled by K172. The a divalent metal cation site is built by E243, D244, and D267. NAD(+) is bound by residues D267 and N415.

It belongs to the malic enzymes family. As to quaternary structure, homotetramer. Requires Mg(2+) as cofactor. It depends on Mn(2+) as a cofactor.

The enzyme catalyses (S)-malate + NAD(+) = pyruvate + CO2 + NADH. The catalysed reaction is oxaloacetate + H(+) = pyruvate + CO2. In Shewanella putrefaciens (strain CN-32 / ATCC BAA-453), this protein is NAD-dependent malic enzyme.